The sequence spans 711 residues: Quinolinate synthase, chloroplastic (711 aa).

A chloroplast-targeting transit peptide spans Met-1–Arg-41. Positions Pro-17–Ser-63 are disordered. Cys-114 functions as the Cysteine persulfide intermediate in the catalytic mechanism. Iminosuccinate-binding residues include His-263 and Ser-289. Position 343 (Cys-343) interacts with [4Fe-4S] cluster. Iminosuccinate is bound by residues Tyr-372–Asn-374 and Ser-394. [4Fe-4S] cluster is bound at residue Cys-467. Iminosuccinate is bound by residues His-493–Glu-495 and Thr-518. Cys-631 contacts [4Fe-4S] cluster.

Belongs to the quinolinate synthase family. Type 1 subfamily. In terms of assembly, homodimer. [4Fe-4S] cluster serves as cofactor.

The protein resides in the plastid. It is found in the chloroplast. The catalysed reaction is iminosuccinate + dihydroxyacetone phosphate = quinolinate + phosphate + 2 H2O + H(+). It participates in cofactor biosynthesis; NAD(+) biosynthesis; quinolinate from iminoaspartate: step 1/1. In terms of biological role, catalyzes the condensation of iminoaspartate with dihydroxyacetone phosphate to form quinolinate. This is Quinolinate synthase, chloroplastic from Oryza sativa subsp. japonica (Rice).